Reading from the N-terminus, the 467-residue chain is Ribosome biogenesis protein YTM1 (467 aa).

The tract at residues 8-95 (IKIKFFTNEE…ETFLSLEYTR (88 aa)) is ubiquitin-like (UBL) domain. The segment at 105 to 467 (SFNNEDWISS…QINKGSDISK (363 aa)) is sufficient for interaction with ERB1 and association with 66S pre-ribosomes. WD repeat units lie at residues 120 to 159 (KTLP…EKQY), 161 to 199 (GHSG…GSIP), 216 to 255 (GHKA…MTTI), 293 to 333 (SHTQ…CIDT), 335 to 374 (STGY…NTTE), 382 to 422 (GHTN…SLYT), and 432 to 467 (KGAD…DISK).

It belongs to the WD repeat WDR12/YTM1 family. In terms of assembly, component of the NOP7 complex, composed of ERB1, NOP7 and YTM1. The complex is held together by ERB1, which interacts with NOP7 via its N-terminal domain and with YTM1 via a high-affinity interaction between the seven-bladed beta-propeller domains of the 2 proteins. The NOP7 complex associates with the 66S pre-ribosome. Interacts (via UBL domain) with MDN1 (via VWFA/MIDAS domain).

The protein resides in the nucleus. It is found in the nucleolus. Its subcellular location is the nucleoplasm. In terms of biological role, component of the NOP7 complex, which is required for maturation of the 25S and 5.8S ribosomal RNAs and formation of the 60S ribosome. This is Ribosome biogenesis protein YTM1 from Scheffersomyces stipitis (strain ATCC 58785 / CBS 6054 / NBRC 10063 / NRRL Y-11545) (Yeast).